The following is a 328-amino-acid chain: NADH-quinone oxidoreductase subunit H (328 aa).

Helical transmembrane passes span 8-28 (VAAIAFALFQAVVILLAAVGA), 81-101 (GLFVLAPAIAMASLLLSFMVI), 114-134 (IGLLFFFAMAGINVYAVLFAG), 154-174 (LSYEVFMGLSLMGVVAMAGSF), 186-206 (LWFIVPQFFGFCTFLVAGIAV), 237-257 (FFVGEYVGIVLVSALMVTLFL), 265-285 (LPPIVWFLLKTAVFVGFFILL), and 304-324 (VCLPLTLINLLVTGALILIFS).

Belongs to the complex I subunit 1 family. As to quaternary structure, NDH-1 is composed of 14 different subunits. Subunits NuoA, H, J, K, L, M, N constitute the membrane sector of the complex.

The protein localises to the cell inner membrane. It carries out the reaction a quinone + NADH + 5 H(+)(in) = a quinol + NAD(+) + 4 H(+)(out). NDH-1 shuttles electrons from NADH, via FMN and iron-sulfur (Fe-S) centers, to quinones in the respiratory chain. The immediate electron acceptor for the enzyme in this species is believed to be ubiquinone. Couples the redox reaction to proton translocation (for every two electrons transferred, four hydrogen ions are translocated across the cytoplasmic membrane), and thus conserves the redox energy in a proton gradient. This subunit may bind ubiquinone. The polypeptide is NADH-quinone oxidoreductase subunit H (Chromohalobacter salexigens (strain ATCC BAA-138 / DSM 3043 / CIP 106854 / NCIMB 13768 / 1H11)).